A 92-amino-acid chain; its full sequence is Small ribosomal subunit protein bS20 (92 aa).

Positions 1 to 25 (MANSAQARKRARQAAKANSHNSALR) are disordered.

The protein belongs to the bacterial ribosomal protein bS20 family.

In terms of biological role, binds directly to 16S ribosomal RNA. In Paraburkholderia phymatum (strain DSM 17167 / CIP 108236 / LMG 21445 / STM815) (Burkholderia phymatum), this protein is Small ribosomal subunit protein bS20.